A 239-amino-acid chain; its full sequence is Vesicle-associated protein 1-2 (239 aa).

Met1 carries the N-acetylmethionine modification. Over 1–215 the chain is Cytoplasmic; the sequence is MSNELLTIDP…RRESKRSKSG (215 aa). N-acetylserine; in Vesicle-associated protein 1-2, N-terminally processed is present on Ser2. Residues 5-125 form the MSP domain; sequence LLTIDPVDLQ…EETKLRVVYV (121 aa). The interval 123–174 is disordered; it reads VYVAPPRPPSPVREGSEEGSSPRASVSDNGNASDFTAAPRFSADRVDAQDNS. Ser132 is subject to Phosphoserine. The segment covering 140–156 has biased composition (polar residues); that stretch reads EGSSPRASVSDNGNASD. Ser164 bears the Phosphoserine mark. A coiled-coil region spans residues 169 to 215; that stretch reads DAQDNSSEARALVTKLTEEKNSAVQLNNRLQQELDQLRRESKRSKSG. A helical; Anchor for type IV membrane protein transmembrane segment spans residues 216–236; the sequence is GIPFMYVLLVGLIGLILGYIM.

The protein belongs to the VAMP-associated protein (VAP) (TC 9.B.17) family. In terms of assembly, interacts with ORP3A. Binds to VLG at the endomembrane system.

It localises to the endoplasmic reticulum membrane. Its function is as follows. Vesicle-associated protein that binds the oxysterol-binding protein ORP3A and allows its targeting to the ER. This Arabidopsis thaliana (Mouse-ear cress) protein is Vesicle-associated protein 1-2.